Here is a 353-residue protein sequence, read N- to C-terminus: Phosphoribosylformylglycinamidine cyclo-ligase (353 aa).

The protein belongs to the AIR synthase family.

The protein localises to the cytoplasm. It carries out the reaction 2-formamido-N(1)-(5-O-phospho-beta-D-ribosyl)acetamidine + ATP = 5-amino-1-(5-phospho-beta-D-ribosyl)imidazole + ADP + phosphate + H(+). It participates in purine metabolism; IMP biosynthesis via de novo pathway; 5-amino-1-(5-phospho-D-ribosyl)imidazole from N(2)-formyl-N(1)-(5-phospho-D-ribosyl)glycinamide: step 2/2. This is Phosphoribosylformylglycinamidine cyclo-ligase from Ralstonia nicotianae (strain ATCC BAA-1114 / GMI1000) (Ralstonia solanacearum).